The primary structure comprises 295 residues: Fructose-bisphosphate aldolase class 1 (295 aa).

The active-site Proton acceptor is Glu176. Residue Lys213 is the Schiff-base intermediate with dihydroxyacetone-P of the active site.

It belongs to the class I fructose-bisphosphate aldolase family.

It carries out the reaction beta-D-fructose 1,6-bisphosphate = D-glyceraldehyde 3-phosphate + dihydroxyacetone phosphate. The protein operates within carbohydrate degradation; glycolysis; D-glyceraldehyde 3-phosphate and glycerone phosphate from D-glucose: step 4/4. This is Fructose-bisphosphate aldolase class 1 from Clostridium acetobutylicum (strain ATCC 824 / DSM 792 / JCM 1419 / IAM 19013 / LMG 5710 / NBRC 13948 / NRRL B-527 / VKM B-1787 / 2291 / W).